Consider the following 251-residue polypeptide: Hydroxyacylglutathione hydrolase (251 aa).

Residues H55, H57, D59, H60, H112, D131, and H169 each contribute to the Zn(2+) site.

It belongs to the metallo-beta-lactamase superfamily. Glyoxalase II family. As to quaternary structure, monomer. Requires Zn(2+) as cofactor.

The catalysed reaction is an S-(2-hydroxyacyl)glutathione + H2O = a 2-hydroxy carboxylate + glutathione + H(+). The protein operates within secondary metabolite metabolism; methylglyoxal degradation; (R)-lactate from methylglyoxal: step 2/2. Functionally, thiolesterase that catalyzes the hydrolysis of S-D-lactoyl-glutathione to form glutathione and D-lactic acid. This Erythrobacter litoralis (strain HTCC2594) protein is Hydroxyacylglutathione hydrolase.